The primary structure comprises 238 residues: Ribonuclease PH (238 aa).

Residues Arg-86 and 124 to 126 contribute to the phosphate site; that span reads GTR.

Belongs to the RNase PH family. In terms of assembly, homohexameric ring arranged as a trimer of dimers.

It carries out the reaction tRNA(n+1) + phosphate = tRNA(n) + a ribonucleoside 5'-diphosphate. Phosphorolytic 3'-5' exoribonuclease that plays an important role in tRNA 3'-end maturation. Removes nucleotide residues following the 3'-CCA terminus of tRNAs; can also add nucleotides to the ends of RNA molecules by using nucleoside diphosphates as substrates, but this may not be physiologically important. Probably plays a role in initiation of 16S rRNA degradation (leading to ribosome degradation) during starvation. The chain is Ribonuclease PH from Histophilus somni (strain 2336) (Haemophilus somnus).